The primary structure comprises 195 residues: dCTP deaminase (195 aa).

DCTP-binding positions include 105-110 (RSSLGR), Asp123, 131-133 (TLE), Gln152, Tyr166, Lys173, and Gln177. Glu133 functions as the Proton donor/acceptor in the catalytic mechanism. Residues 159–195 (KSPAERPYGAERGSKYQGQTGPQASRIQGDREFGGDQ) are disordered. The segment covering 160–172 (SPAERPYGAERGS) has biased composition (basic and acidic residues). The span at 174 to 184 (YQGQTGPQASR) shows a compositional bias: polar residues. Basic and acidic residues predominate over residues 186-195 (QGDREFGGDQ).

It belongs to the dCTP deaminase family. As to quaternary structure, homotrimer.

The enzyme catalyses dCTP + H2O + H(+) = dUTP + NH4(+). The protein operates within pyrimidine metabolism; dUMP biosynthesis; dUMP from dCTP (dUTP route): step 1/2. Its function is as follows. Catalyzes the deamination of dCTP to dUTP. The chain is dCTP deaminase from Natronomonas pharaonis (strain ATCC 35678 / DSM 2160 / CIP 103997 / JCM 8858 / NBRC 14720 / NCIMB 2260 / Gabara) (Halobacterium pharaonis).